The chain runs to 322 residues: Olfactory receptor 5P2 (322 aa).

At 1-28 (MNSLKDGNHTALTGFILLGLTDDPILRV) the chain is on the extracellular side. Asn8 carries N-linked (GlcNAc...) asparagine glycosylation. The helical transmembrane segment at 29-42 (ILFMIILSGNLSII) threads the bilayer. Residues 43-50 (ILIRISSQ) are Cytoplasmic-facing. The chain crosses the membrane as a helical span at residues 51–71 (LHHPMYFFLSHLAFADMAYSS). The Extracellular segment spans residues 72–95 (SVTPNMLVNFLVERNTVSYLGCAI). An intrachain disulfide couples Cys93 to Cys185. The chain crosses the membrane as a helical span at residues 96–116 (QLGSAAFFATVECVLLAAMAY). Residues 117–135 (DRFVAICSPLLYSTKMSTQ) are Cytoplasmic-facing. A helical membrane pass occupies residues 136–156 (VSVQLLLVVYIAGFLIAVSYT). Residues 157–192 (TSFYFLLFCGPNQVNHFFCDFAPLLELSCSDISVST) lie on the Extracellular side of the membrane. A helical transmembrane segment spans residues 193–213 (VVLSFSSGSIIVVTVCVIAVC). At 214–233 (YIYILITILKMRSTEGHHKA) the chain is on the cytoplasmic side. A helical transmembrane segment spans residues 234–254 (FSTCTSHLTVVTLFYGTITFI). Residues 255 to 267 (YVMPNFSYSTDQN) are Extracellular-facing. An N-linked (GlcNAc...) asparagine glycan is attached at Asn259. The helical transmembrane segment at 268-288 (KVVSVLYTVVIPMLNPLIYSL) threads the bilayer. Residues 289–322 (RNKEIKGALKRELVRKILSHDACYFSRTSNNDIT) lie on the Cytoplasmic side of the membrane.

It belongs to the G-protein coupled receptor 1 family. As to expression, expressed in the tongue.

The protein localises to the cell membrane. Its function is as follows. Odorant receptor (Potential). May be involved in taste perception. This is Olfactory receptor 5P2 (OR5P2) from Homo sapiens (Human).